Here is a 97-residue protein sequence, read N- to C-terminus: M-zodatoxin-Lt7a (97 aa).

Positions 1–22 are cleaved as a signal peptide; the sequence is MKFYVVALALLVAFVCIAESRS. A propeptide spanning residues 23-63 is cleaved from the precursor; sequence VETERAVDADLEDDLDDLEEYLEGIAEALELEDFPDTEEAR. A Processing quadruplet motif motif is present at residues 60–63; that stretch reads EEAR.

Post-translationally, cleavage of the propeptide depends on the processing quadruplet motif (XXXR, with at least one of X being E). Expressed by the venom gland.

It localises to the secreted. In terms of biological role, does not have antimicrobial or antifungal activity. Does not have hemolytic activity against rabbit erythrocytes. However, it causes some conductance changes in planar bilayer membranes, without membrane rupture, suggesting a cytolytic function on other biological targets. It causes paralysis, but is not lethal when injected into insect (M.domestica) larvae. The protein is M-zodatoxin-Lt7a of Lachesana tarabaevi (Spider).